The following is a 74-amino-acid chain: MDAVQEFEHRITELEIQSALQEDVIAGLNAMVAELRQTLDLQQAQLRLLYQKMQDRNPDAQEPYSLRDEIPPHY.

It belongs to the SlyX family.

This Neisseria meningitidis serogroup A / serotype 4A (strain DSM 15465 / Z2491) protein is Protein SlyX homolog.